A 60-amino-acid polypeptide reads, in one-letter code: Large ribosomal subunit protein bL32 (60 aa).

Belongs to the bacterial ribosomal protein bL32 family.

The protein is Large ribosomal subunit protein bL32 of Streptococcus gordonii (strain Challis / ATCC 35105 / BCRC 15272 / CH1 / DL1 / V288).